Consider the following 212-residue polypeptide: MRDPVETYMNLVPMVVEQTNRGERAYDIFSRLLKERIIFLTGPVEDGMSTLVVAQLLFLEAENPKKEISMYINSPGGVVTSGLAIYDTMQFIRPPVSTLCTGQAASMGSLLLAAGHKDMRFSLPNARIMVHQPSGGFQGQATDIMLHAQEILNLKKRLNEIYVHHTGQTYKAIEDALERDKFLTADMARDFGIVDKVIDKRAEESAPGPKVA.

The active-site Nucleophile is S106. H131 is an active-site residue.

It belongs to the peptidase S14 family. In terms of assembly, fourteen ClpP subunits assemble into 2 heptameric rings which stack back to back to give a disk-like structure with a central cavity, resembling the structure of eukaryotic proteasomes.

It is found in the cytoplasm. The enzyme catalyses Hydrolysis of proteins to small peptides in the presence of ATP and magnesium. alpha-casein is the usual test substrate. In the absence of ATP, only oligopeptides shorter than five residues are hydrolyzed (such as succinyl-Leu-Tyr-|-NHMec, and Leu-Tyr-Leu-|-Tyr-Trp, in which cleavage of the -Tyr-|-Leu- and -Tyr-|-Trp bonds also occurs).. In terms of biological role, cleaves peptides in various proteins in a process that requires ATP hydrolysis. Has a chymotrypsin-like activity. Plays a major role in the degradation of misfolded proteins. This Rhodopseudomonas palustris (strain HaA2) protein is ATP-dependent Clp protease proteolytic subunit.